A 313-amino-acid chain; its full sequence is Ribosomal protein L11 methyltransferase (313 aa).

Residues threonine 164, glycine 185, aspartate 207, and asparagine 249 each contribute to the S-adenosyl-L-methionine site.

Belongs to the methyltransferase superfamily. PrmA family.

The protein localises to the cytoplasm. It carries out the reaction L-lysyl-[protein] + 3 S-adenosyl-L-methionine = N(6),N(6),N(6)-trimethyl-L-lysyl-[protein] + 3 S-adenosyl-L-homocysteine + 3 H(+). Its function is as follows. Methylates ribosomal protein L11. In Clostridium botulinum (strain Alaska E43 / Type E3), this protein is Ribosomal protein L11 methyltransferase.